Consider the following 175-residue polypeptide: PE-PGRS family protein PE_PGRS8 (175 aa).

A PE domain is found at 1–93 (MSFVIAAPEA…AGSYAAAEAA (93 aa)).

This sequence belongs to the mycobacterial PE family. PGRS subfamily.

Its subcellular location is the secreted. The protein resides in the cell wall. It localises to the cell surface. This is PE-PGRS family protein PE_PGRS8 from Mycobacterium tuberculosis (strain ATCC 25618 / H37Rv).